The following is a 62-amino-acid chain: Short neurotoxin 1 (62 aa).

Over residues 1 to 16 (LECHNQQSIQTPTTTG) the composition is skewed to polar residues. The disordered stretch occupies residues 1–20 (LECHNQQSIQTPTTTGCSGG). Disulfide bonds link C3-C24, C17-C41, C43-C54, and C55-C60.

Belongs to the three-finger toxin family. Short-chain subfamily. Type I alpha-neurotoxin sub-subfamily. In terms of tissue distribution, expressed by the venom gland.

The protein localises to the secreted. Functionally, binds to muscle nicotinic acetylcholine receptor (nAChR) and inhibit acetylcholine from binding to the receptor, thereby impairing neuromuscular transmission. The chain is Short neurotoxin 1 from Naja kaouthia (Monocled cobra).